Reading from the N-terminus, the 456-residue chain is Phospholipase A1 member A (456 aa).

The signal sequence occupies residues 1 to 25 (MPPDFWERCFWLWGLLLWLSVGSTG). Asparagine 34 carries an N-linked (GlcNAc...) asparagine glycan. The active-site Nucleophile is serine 166. Aspartate 190 (charge relay system) is an active-site residue. An intrachain disulfide couples cysteine 245 to cysteine 258. The active-site Charge relay system is histidine 260. Cystine bridges form between cysteine 282–cysteine 293 and cysteine 296–cysteine 304.

It belongs to the AB hydrolase superfamily. Lipase family.

It is found in the secreted. The catalysed reaction is a 1,2-diacyl-sn-glycero-3-phospho-L-serine + H2O = a 2-acyl-sn-glycero-3-phospho-L-serine + a fatty acid + H(+). It carries out the reaction 1,2-di-(9Z)-octadecenoyl-sn-glycero-3-phospho-L-serine + H2O = 2-(9Z-octadecenoyl)-sn-glycero-3-phospho-L-serine + (9Z)-octadecenoate + H(+). The enzyme catalyses 1-hexadecanoyl-2-(5Z,8Z,11Z,14Z-eicosatetraenoyl)-sn-glycero-3-phospho-L-serine + H2O = 2-(5Z,8Z,11Z,14Z)-eicosatetraenoyl-sn-glycero-3-phospho-L-serine + hexadecanoate + H(+). It catalyses the reaction a 1-acyl-sn-glycero-3-phospho-L-serine + H2O = sn-glycero-3-phospho-L-serine + a fatty acid + H(+). The catalysed reaction is 1-(9Z-octadecenoyl)-sn-glycero-3-phospho-L-serine + H2O = sn-glycero-3-phospho-L-serine + (9Z)-octadecenoate + H(+). Its function is as follows. Hydrolyzes the ester bond of the acyl group attached at the sn-1 position of phosphatidylserines (phospholipase A1 activity) and 1-acyl-2-lysophosphatidylserines (lysophospholipase activity) in the pathway of phosphatidylserines acyl chain remodeling. Cleaves phosphatidylserines exposed on the outer leaflet of the plasma membrane of apoptotic cells producing 2-acyl-1-lysophosphatidylserines, which in turn enhance mast cell activation and histamine production. Has no activity toward other glycerophospholipids including phosphatidylcholines, phosphatidylethanolamines, phosphatidic acids or phosphatidylinositols, or glycerolipids such as triolein. This Bos taurus (Bovine) protein is Phospholipase A1 member A (PLA1A).